The chain runs to 148 residues: Macrodomain Ter protein (148 aa).

It belongs to the MatP family. In terms of assembly, homodimer.

It localises to the cytoplasm. In terms of biological role, required for spatial organization of the terminus region of the chromosome (Ter macrodomain) during the cell cycle. Prevents early segregation of duplicated Ter macrodomains during cell division. Binds specifically to matS, which is a 13 bp signature motif repeated within the Ter macrodomain. The sequence is that of Macrodomain Ter protein from Haemophilus ducreyi (strain 35000HP / ATCC 700724).